A 287-amino-acid polypeptide reads, in one-letter code: Small ribosomal subunit protein uS2 (287 aa).

Residues 233–287 (HKAPQDDIEPMAEWEKQLLQSGDSSGETRPISGTDRPLDGDLSKGPAPQDEELSD) form a disordered region. Residues 250–259 (LLQSGDSSGE) are compositionally biased toward polar residues.

It belongs to the universal ribosomal protein uS2 family.

This is Small ribosomal subunit protein uS2 from Tropheryma whipplei (strain TW08/27) (Whipple's bacillus).